A 327-amino-acid polypeptide reads, in one-letter code: Pyruvate dehydrogenase E1 component subunit beta (327 aa).

Thiamine diphosphate is bound at residue Glu-60.

As to quaternary structure, heterodimer of an alpha and a beta chain. Thiamine diphosphate is required as a cofactor.

The catalysed reaction is N(6)-[(R)-lipoyl]-L-lysyl-[protein] + pyruvate + H(+) = N(6)-[(R)-S(8)-acetyldihydrolipoyl]-L-lysyl-[protein] + CO2. In terms of biological role, the pyruvate dehydrogenase complex catalyzes the overall conversion of pyruvate to acetyl-CoA and CO(2). It contains multiple copies of three enzymatic components: pyruvate dehydrogenase (E1), dihydrolipoamide acetyltransferase (E2) and lipoamide dehydrogenase (E3). This is Pyruvate dehydrogenase E1 component subunit beta (pdhB) from Acholeplasma laidlawii.